The sequence spans 479 residues: MSQNNEMHPRNPYRNKPPDFKALAVEYPEFRKFCQYVSNGKVTFDFKKDAAVRCLTQTLLKKDFNLDVEIPPGHLVPRVPQKLNYCLLIDDLLKANKLTKNVIGIDIGTGTSCIHALIGARQFNWKFIATDGDEKSVRVAHENVAKNGLSSSICVVHVNPDVKTVLMDVVNTIPDTDYAFCMCNPPFFEKGNGDDKFCEDISSSTETYSNRVASEFRTAPHSATFASSAELFVDGGEVAFVNRIIDDSVLLRDRIKIYTTMIGRKSSLKPLQNRLQRFGDDVKIMISVLNQGKTKRWMLAWTFSKSVSLTTIDRPISFQCPKPGLTRLMQEISILNGRLRQEDTLAIVAEFKCVTWTNQRARKRAKAILSESSIKKAKWNFSNVACQVAFGAGDGKDSYTDAGNFVSSESIPTNNLNAWDNASQAYFPLPNGEVPGPIIRIRIQVFSEDSYDSISFELISGSKQHLHQLVQYLKNLICR.

S-adenosyl-L-methionine contacts are provided by Lys82, Gly108, Asp131, Thr164, and Asn184. The segment at 420–424 (DNASQ) is involved in dlc-1 binding.

The protein belongs to the methyltransferase superfamily. METTL16/RlmF family. In terms of assembly, self-associates. Interacts with dlc-1; the interaction is direct, and is required for nuclear localization of mett-10. Expressed in the intestine, vulva, and cells of the somatic gonad including distal tip cells, gonadal sheath cells and spermatheca.

It is found in the nucleus. The catalysed reaction is an adenosine in mRNA + S-adenosyl-L-methionine = an N(6)-methyladenosine in mRNA + S-adenosyl-L-homocysteine + H(+). The enzyme catalyses adenosine in U6 snRNA + S-adenosyl-L-methionine = N(6)-methyladenosine in U6 snRNA + S-adenosyl-L-homocysteine + H(+). In terms of biological role, RNA N6-methyltransferase that methylates adenosine residues at the N(6) position of a subset of RNAs and is involved in S-adenosyl-L-methionine homeostasis by regulating splicing of S-adenosylmethionine synthase transcripts (sams-3, sams-4 and sams-5). Able to N6-methylate a subset of mRNAs containing the 5'UACAGAAAC-3' nonamer sequence. Plays a key role in S-adenosyl-L-methionine homeostasis: under rich-diet conditions, catalyzes N6-methylation of S-adenosylmethionine synthase mRNAs (sams-3, sams-4 and sams-5), directly inhibiting splicing and protein production of S-adenosylmethionine synthase. In addition to mRNAs, also able to mediate N6-methylation of U6 small nuclear RNA (U6 snRNA). Required for gamete production, inhibiting germ cell proliferative fate and ensuring germ cell meiotic development. Also promotes progression of the mitotic cell cycle in those germ cells that continue to proliferate. Plays a role in the development of the vulva, somatic gonad and embryo. This is U6 small nuclear RNA (adenine-(43)-N(6))-methyltransferase from Caenorhabditis elegans.